The chain runs to 497 residues: Zinc metalloproteinase nas-28 (497 aa).

The N-terminal stretch at 1–14 (MFFPVVFFIPFVLG) is a signal peptide. Positions 15–120 (APTQKALEKI…IENGNYRSKR (106 aa)) are excised as a propeptide. N-linked (GlcNAc...) asparagine glycosylation occurs at Asn-76. The Peptidase M12A domain maps to 121–319 (QAIVDTTNFW…IGVNKLYNCT (199 aa)). 7 cysteine pairs are disulfide-bonded: Cys-164–Cys-318, Cys-185–Cys-206, Cys-328–Cys-339, Cys-331–Cys-342, Cys-344–Cys-353, Cys-364–Cys-398, and Cys-427–Cys-447. A Zn(2+)-binding site is contributed by His-214. The active site involves Glu-215. Zn(2+) contacts are provided by His-218 and His-224. Residue Asn-317 is glycosylated (N-linked (GlcNAc...) asparagine). The EGF-like domain occupies 324–354 (IQMKCSNCGITDSRNCNQCKCPRYFTGASCD). Residues 364-483 (CNGAVLQATS…LTFSIQYRAV (120 aa)) enclose the CUB domain. A glycan (N-linked (GlcNAc...) asparagine) is linked at Asn-394.

Requires Zn(2+) as cofactor.

The protein resides in the secreted. Its function is as follows. Metalloprotease. The chain is Zinc metalloproteinase nas-28 (nas-28) from Caenorhabditis elegans.